We begin with the raw amino-acid sequence, 275 residues long: Putative phosphoenolpyruvate synthase regulatory protein (275 aa).

157 to 164 (GVSRCGKT) lines the ADP pocket.

This sequence belongs to the pyruvate, phosphate/water dikinase regulatory protein family. PSRP subfamily.

It catalyses the reaction [pyruvate, water dikinase] + ADP = [pyruvate, water dikinase]-phosphate + AMP + H(+). The enzyme catalyses [pyruvate, water dikinase]-phosphate + phosphate + H(+) = [pyruvate, water dikinase] + diphosphate. In terms of biological role, bifunctional serine/threonine kinase and phosphorylase involved in the regulation of the phosphoenolpyruvate synthase (PEPS) by catalyzing its phosphorylation/dephosphorylation. This Bordetella bronchiseptica (strain ATCC BAA-588 / NCTC 13252 / RB50) (Alcaligenes bronchisepticus) protein is Putative phosphoenolpyruvate synthase regulatory protein.